Here is a 238-residue protein sequence, read N- to C-terminus: uncharacterized protein (238 aa).

2 disordered regions span residues 123–167 and 180–238; these read FRQG…VHGG and SAMG…AKRR. Over residues 152 to 161 the composition is skewed to low complexity; it reads SGHSPSPGRH. Positions 207–238 are enriched in basic residues; sequence HRGHGHRFRLLAPRSRPRQRRGGGSRAAAKRR.

This sequence belongs to the PNP/MTAP phosphorylase family.

This is an uncharacterized protein from Rhodospirillum rubrum.